The primary structure comprises 832 residues: MPLSYQHFRKLLLLDDEAGPLEEELPRLADEGLNHRVAEDLNLQLPNVSIPWTHKVGNFTGLYSSTLPIFNPNWQTPSFPDIHLHQDIINKCEQFVGPLTVNERRRLKLVMPARFYPTSTKYLPLEKGIKPYYPQDVVNHYFQTRHYLHTLWEAGILYKRETTRSASFCGSPYSWEQELQHGAESFNQQSTRIFSRAPVGPCIQSKHQQSRLGLQPQQGQLAKGQRGRSGSVRSRAHSATRRSVGVEPSGSGHNNNSASESASCLHQSAVRQEAYSHFSTSERHSSSGHALELHDISPSSARSQSKGSVFSCWWLQFRNSIPCSGHCLSHLVNLLEDWGPCTEHGKHHIRIPRTPARVTGGVFLVDKNPHNTAESRLVVDFSQFSRGSTRVPWPKFAVPNLQSLTNLLSSNLSWLSLDVSAAFYHLPLHPAAMPHLLVGSSGLSRYVARLSSNSRIHDHQHGTMQNLHNYCTRNLFVSLMLLYKTFGRKLHLYSHPIVLGFRKIPMGVGLSPFLLAQFTSAICSVVRRAFPHCLAFSYMDDVVLGAKSVQHLESLYTAVTNFLLSLGIHLNPTKTKRWGYSLNFMGYVIGSWGTLPQEHIVQKIKHCFRKIPVNRPIDWKVCQRIVGLLGFAAPFTQCGYPALMPLYACIQAKQAFTFSPIYKAFLSKQYATLYPVARQRAGLCQVFADATPTGWGLVIGQQRMRGTFVAPLPIHTAELLAACFARSRSGANIIGTDNSVVLSRKYTSFPWLLGCAANWILRGTSFVYVPSALNPADDPSRGRLGLSRPLCRLPFQPTTGRTSLYAVSPSVPSHLPDRVHFASPLHVAWRPP.

Positions 1–177 (MPLSYQHFRK…FCGSPYSWEQ (177 aa)) are terminal protein domain (TP). Residues 178-335 (ELQHGAESFN…HCLSHLVNLL (158 aa)) form a spacer region. Polar residues-rich tracts occupy residues 205-220 (SKHQQSRLGLQPQQGQ) and 251-263 (SGHNNNSASESAS). Residues 205 to 263 (SKHQQSRLGLQPQQGQLAKGQRGRSGSVRSRAHSATRRSVGVEPSGSGHNNNSASESAS) form a disordered region. A polymerase/reverse transcriptase domain (RT) region spans residues 336 to 679 (EDWGPCTEHG…YATLYPVARQ (344 aa)). A Reverse transcriptase domain is found at 346 to 589 (KHHIRIPRTP…YSLNFMGYVI (244 aa)). Positions 418, 540, and 541 each coordinate Mg(2+).

Belongs to the hepadnaviridae P protein family.

It catalyses the reaction DNA(n) + a 2'-deoxyribonucleoside 5'-triphosphate = DNA(n+1) + diphosphate. The catalysed reaction is Endonucleolytic cleavage to 5'-phosphomonoester.. Activated by host HSP70 and HSP40 in vitro to be able to bind the epsilon loop of the pgRNA. Because deletion of the RNase H region renders the protein partly chaperone-independent, the chaperones may be needed indirectly to relieve occlusion of the RNA-binding site by this domain. Inhibited by several reverse-transcriptase inhibitors: Lamivudine, Adefovir and Entecavir. Functionally, multifunctional enzyme that converts the viral RNA genome into dsDNA in viral cytoplasmic capsids. This enzyme displays a DNA polymerase activity that can copy either DNA or RNA templates, and a ribonuclease H (RNase H) activity that cleaves the RNA strand of RNA-DNA heteroduplexes in a partially processive 3'- to 5'-endonucleasic mode. Neo-synthesized pregenomic RNA (pgRNA) are encapsidated together with the P protein, and reverse-transcribed inside the nucleocapsid. Initiation of reverse-transcription occurs first by binding the epsilon loop on the pgRNA genome, and is initiated by protein priming, thereby the 5'-end of (-)DNA is covalently linked to P protein. Partial (+)DNA is synthesized from the (-)DNA template and generates the relaxed circular DNA (RC-DNA) genome. After budding and infection, the RC-DNA migrates in the nucleus, and is converted into a plasmid-like covalently closed circular DNA (cccDNA). The activity of P protein does not seem to be necessary for cccDNA generation, and is presumably released from (+)DNA by host nuclear DNA repair machinery. The chain is Protein P from Gorilla gorilla (western gorilla).